The following is a 728-amino-acid chain: MVFGFTKRDRRVPDLSRYDYYYQNHEDYNKSPQLSAAAASAASAASPDRTNYSRSHSLVSHAPSIPRQRSSVKSPGRRLSTSSAAPPTSRAAAKQYSQKTYSLRSQRSGEYHLHPPGYTTNGSRMNSMTSGANVRRNYGKNKSTAGNNNDSRANSITVKTTQVTDPSGRTQSITKKTIRKINGYEYVETTTTTKNLVPLGDSQRHFDEFSENYMLQDDDILEEQASDNIHDIIEENETDNEKPYSPVSESHLQDDSELNVEKPDFPLGSYFHHKYSTDVMPLEEESSLSNFSDALDYIPPTHQTSSKYIHNKRKQASTTRRKKRPPAVKNAEAEAKKPLTEAEMYLKALEVAKRNVYHTDAASDNASAPLGSNKSRKSRMGQKMTLRSSSDSPTATANLVKSNVEVQPKRFTSSFFSRNTKSAPHEVHNHSVSTHFKSNKAVDPVPEPKSANTGLTDKEMYDQALKIAQARYYNSHGIQPEAVDNSTTAAKPRQVGVSHLGSTGSIPPNEQHYLGDSEIPVQSEVHEYEPIPLQKTKTTGSSKNKFKTMFDKVLQFSQENYGYQHKKEQGEQTPVTRNAEESFPAASISEGVTTAKPSSNEGVMTNPVVTDSPSPLQQQIDSTTASSNGQSQGNVPTSAVASTTRTRSPELQDNLKSSSSLLQDQTPQRQEDATDPTTSSTNELSAAEPTMVTSTHATKTIQAQTQDPPTKHKKSSFFTKLFKKKSSR.

Disordered regions lie at residues 33–171 (QLSA…GRTQ), 236–261 (NETD…LNVE), 300–335 (PTHQ…EAEA), 363–403 (SDNA…VKSN), 422–454 (SAPH…ANTG), 495–514 (VGVS…QHYL), and 561–728 (YGYQ…KSSR). Positions 35–46 (SAAAASAASAAS) are enriched in low complexity. The segment covering 48-58 (DRTNYSRSHSL) has biased composition (polar residues). 2 positions are modified to phosphoserine: S57 and S64. Over residues 80-93 (STSSAAPPTSRAAA) the composition is skewed to low complexity. Composition is skewed to polar residues over residues 95–106 (QYSQKTYSLRSQ), 118–132 (YTTN…TSGA), and 140–171 (KNKS…GRTQ). Residues S127, S151, and S155 each carry the phosphoserine modification. A compositionally biased stretch (basic and acidic residues) spans 251 to 261 (HLQDDSELNVE). Over residues 309-326 (IHNKRKQASTTRRKKRPP) the composition is skewed to basic residues. Residue S363 is modified to Phosphoserine. Polar residues-rich tracts occupy residues 363 to 373 (SDNASAPLGSN) and 385 to 403 (TLRS…VKSN). The segment covering 590 to 634 (EGVTTAKPSSNEGVMTNPVVTDSPSPLQQQIDSTTASSNGQSQGN) has biased composition (polar residues). The segment covering 635–646 (VPTSAVASTTRT) has biased composition (low complexity). Residue T646 is modified to Phosphothreonine. Composition is skewed to polar residues over residues 654–668 (NLKS…QTPQ), 675–684 (DPTTSSTNEL), and 691–708 (MVTS…TQDP). S660 is modified (phosphoserine). Residues 711–728 (KHKKSSFFTKLFKKKSSR) show a composition bias toward basic residues.

The protein resides in the cell membrane. In terms of biological role, may be involved in the control of meiotic sister-chromatid recombination. This Saccharomyces cerevisiae (strain ATCC 204508 / S288c) (Baker's yeast) protein is Meiotic sister-chromatid recombination protein 3 (MSC3).